Here is a 202-residue protein sequence, read N- to C-terminus: MSRYRGPRLRIVRRLGELPGLSRKSPRRAYPPGQHGQARRKRSEYAIRLEEKQKLRLNYGITEKQLVRYVKKARRATGSTGQALLELLEMRLDNTVFRLGMAGTIPGARQLVCHGHITVNGQVVDIPSYQCRPGDIVSVRDRDRSRKLVETNMEFPGLANVPSHLEFDKNTFTGKVNSVIDREWVALQINELLVIEYYSRKA.

Residues 21–42 (LSRKSPRRAYPPGQHGQARRKR) are disordered. The S4 RNA-binding domain occupies 90-152 (MRLDNTVFRL…DRSRKLVETN (63 aa)).

The protein belongs to the universal ribosomal protein uS4 family. Part of the 30S ribosomal subunit. Contacts protein S5. The interaction surface between S4 and S5 is involved in control of translational fidelity.

Functionally, one of the primary rRNA binding proteins, it binds directly to 16S rRNA where it nucleates assembly of the body of the 30S subunit. In terms of biological role, with S5 and S12 plays an important role in translational accuracy. The polypeptide is Small ribosomal subunit protein uS4 (Synechocystis sp. (strain ATCC 27184 / PCC 6803 / Kazusa)).